The following is a 523-amino-acid chain: Probable glucose-1-phosphate adenylyltransferase large subunit, chloroplastic (523 aa).

It belongs to the bacterial/plant glucose-1-phosphate adenylyltransferase family. In terms of assembly, heterotetramer.

It localises to the plastid. The protein resides in the chloroplast. It carries out the reaction alpha-D-glucose 1-phosphate + ATP + H(+) = ADP-alpha-D-glucose + diphosphate. It participates in glycan biosynthesis; starch biosynthesis. Its activity is regulated as follows. Activated by 3'phosphoglycerate, inhibited by orthophosphate. Allosteric regulation. This protein plays a role in synthesis of starch. It catalyzes the synthesis of the activated glycosyl donor, ADP-glucose from Glc-1-P and ATP. The sequence is that of Probable glucose-1-phosphate adenylyltransferase large subunit, chloroplastic from Arabidopsis thaliana (Mouse-ear cress).